A 126-amino-acid polypeptide reads, in one-letter code: Small ribosomal subunit protein uS8 (126 aa).

Belongs to the universal ribosomal protein uS8 family. In terms of assembly, part of the 30S ribosomal subunit. Contacts proteins S5 and S12.

In terms of biological role, one of the primary rRNA binding proteins, it binds directly to 16S rRNA central domain where it helps coordinate assembly of the platform of the 30S subunit. The sequence is that of Small ribosomal subunit protein uS8 from Nitratidesulfovibrio vulgaris (strain ATCC 29579 / DSM 644 / CCUG 34227 / NCIMB 8303 / VKM B-1760 / Hildenborough) (Desulfovibrio vulgaris).